Here is a 421-residue protein sequence, read N- to C-terminus: Hemagglutinin-esterase (421 aa).

Positions M1–S16 are cleaved as a signal peptide. Residues F7 to G127 form an esterase domain 1 region. Residues L17–L392 are Virion surface-facing. The active-site Nucleophile is S40. Residues C44 and C65 are joined by a disulfide bond. N-linked (GlcNAc...) asparagine; by host glycans are attached at residues N54, N89, N153, N236, and N301. 3 disulfides stabilise this stretch: C113–C162, C197–C276, and C205–C249. Residues L128–L266 form a receptor binding region. Residues L267–T379 form an esterase domain 2 region. Cysteines 307 and 312 form a disulfide. N316 carries an N-linked (GlcNAc...) asparagine; by host glycan. Residues D326 and H329 each act as charge relay system in the active site. The cysteines at positions 347 and 371 are disulfide-linked. Residue N358 is glycosylated (N-linked (GlcNAc...) asparagine; by host). Residues I393–F413 form a helical membrane-spanning segment. Over M414 to L421 the chain is Intravirion. An N-linked (GlcNAc...) asparagine; by host glycan is attached at N417.

This sequence belongs to the influenza type C/coronaviruses hemagglutinin-esterase family. As to quaternary structure, homodimer; disulfide-linked. Forms a complex with the M protein in the pre-Golgi. Associates then with S-M complex to form a ternary complex S-M-HE. Post-translationally, N-glycosylated in the host RER.

It is found in the virion membrane. It localises to the host cell membrane. It carries out the reaction N-acetyl-9-O-acetylneuraminate + H2O = N-acetylneuraminate + acetate + H(+). The catalysed reaction is N-acetyl-4-O-acetylneuraminate + H2O = N-acetylneuraminate + acetate + H(+). Functionally, structural protein that makes short spikes at the surface of the virus. Contains receptor binding and receptor-destroying activities. Mediates de-O-acetylation of N-acetyl-4-O-acetylneuraminic acid, which is probably the receptor determinant recognized by the virus on the surface of erythrocytes and susceptible cells. This receptor-destroying activity is important for virus release as it probably helps preventing self-aggregation and ensures the efficient spread of the progeny virus from cell to cell. May serve as a secondary viral attachment protein for initiating infection, the spike protein being the major one. May become a target for both the humoral and the cellular branches of the immune system. The chain is Hemagglutinin-esterase from Bos taurus (Bovine).